A 503-amino-acid polypeptide reads, in one-letter code: ATP synthase subunit alpha (503 aa).

An ATP-binding site is contributed by Gly170 to Thr177.

It belongs to the ATPase alpha/beta chains family. In terms of assembly, F-type ATPases have 2 components, CF(1) - the catalytic core - and CF(0) - the membrane proton channel. CF(1) has five subunits: alpha(3), beta(3), gamma(1), delta(1), epsilon(1). CF(0) has three main subunits: a(1), b(2) and c(9-12). The alpha and beta chains form an alternating ring which encloses part of the gamma chain. CF(1) is attached to CF(0) by a central stalk formed by the gamma and epsilon chains, while a peripheral stalk is formed by the delta and b chains.

It is found in the cell inner membrane. The catalysed reaction is ATP + H2O + 4 H(+)(in) = ADP + phosphate + 5 H(+)(out). In terms of biological role, produces ATP from ADP in the presence of a proton gradient across the membrane. The alpha chain is a regulatory subunit. This is ATP synthase subunit alpha from Helicobacter pylori (strain J99 / ATCC 700824) (Campylobacter pylori J99).